The sequence spans 241 residues: Uridylate kinase (241 aa).

15–18 contributes to the ATP binding site; sequence KLSG. The involved in allosteric activation by GTP stretch occupies residues 23–28; the sequence is GTEGFG. Glycine 57 provides a ligand contact to UMP. Residues glycine 58 and arginine 62 each coordinate ATP. UMP contacts are provided by residues aspartate 77 and 138-145; that span reads TGNPFFTT. The ATP site is built by threonine 165, phenylalanine 171, and aspartate 174.

It belongs to the UMP kinase family. Homohexamer.

The protein localises to the cytoplasm. The catalysed reaction is UMP + ATP = UDP + ADP. Its pathway is pyrimidine metabolism; CTP biosynthesis via de novo pathway; UDP from UMP (UMPK route): step 1/1. Allosterically activated by GTP. Inhibited by UTP. Its function is as follows. Catalyzes the reversible phosphorylation of UMP to UDP. In Salmonella choleraesuis (strain SC-B67), this protein is Uridylate kinase.